A 55-amino-acid polypeptide reads, in one-letter code: MPQLNPNPWFYIMLMSWLTFSLIIQPKLLSFTSANPPSNKTSTTTRTLPWTWPWT.

Residues 7–24 (NPWFYIMLMSWLTFSLII) form a helical membrane-spanning segment. Positions 35–55 (NPPSNKTSTTTRTLPWTWPWT) are disordered. Positions 41–55 (TSTTTRTLPWTWPWT) are enriched in low complexity.

Belongs to the ATPase protein 8 family. In terms of assembly, component of the ATP synthase complex composed at least of ATP5F1A/subunit alpha, ATP5F1B/subunit beta, ATP5MC1/subunit c (homooctomer), MT-ATP6/subunit a, MT-ATP8/subunit 8, ATP5ME/subunit e, ATP5MF/subunit f, ATP5MG/subunit g, ATP5MK/subunit k, ATP5MJ/subunit j, ATP5F1C/subunit gamma, ATP5F1D/subunit delta, ATP5F1E/subunit epsilon, ATP5PF/subunit F6, ATP5PB/subunit b, ATP5PD/subunit d, ATP5PO/subunit OSCP. ATP synthase complex consists of a soluble F(1) head domain (subunits alpha(3) and beta(3)) - the catalytic core - and a membrane F(0) domain - the membrane proton channel (subunits c, a, 8, e, f, g, k and j). These two domains are linked by a central stalk (subunits gamma, delta, and epsilon) rotating inside the F1 region and a stationary peripheral stalk (subunits F6, b, d, and OSCP).

Its subcellular location is the mitochondrion membrane. In terms of biological role, subunit 8, of the mitochondrial membrane ATP synthase complex (F(1)F(0) ATP synthase or Complex V) that produces ATP from ADP in the presence of a proton gradient across the membrane which is generated by electron transport complexes of the respiratory chain. ATP synthase complex consist of a soluble F(1) head domain - the catalytic core - and a membrane F(1) domain - the membrane proton channel. These two domains are linked by a central stalk rotating inside the F(1) region and a stationary peripheral stalk. During catalysis, ATP synthesis in the catalytic domain of F(1) is coupled via a rotary mechanism of the central stalk subunits to proton translocation. In vivo, can only synthesize ATP although its ATP hydrolase activity can be activated artificially in vitro. Part of the complex F(0) domain. The chain is ATP synthase F(0) complex subunit 8 from Corythaixoides concolor (Grey go-away-bird).